The sequence spans 100 residues: Urease subunit gamma (100 aa).

The protein belongs to the urease gamma subunit family. Heterotrimer of UreA (gamma), UreB (beta) and UreC (alpha) subunits. Three heterotrimers associate to form the active enzyme.

The protein resides in the cytoplasm. It carries out the reaction urea + 2 H2O + H(+) = hydrogencarbonate + 2 NH4(+). The protein operates within nitrogen metabolism; urea degradation; CO(2) and NH(3) from urea (urease route): step 1/1. The sequence is that of Urease subunit gamma from Vibrio parahaemolyticus.